Consider the following 333-residue polypeptide: Holliday junction branch migration complex subunit RuvB (333 aa).

The tract at residues 1–182 (MDERLLSGES…FGVLSRLEYY (182 aa)) is large ATPase domain (RuvB-L). ATP is bound by residues leucine 21, arginine 22, glycine 63, lysine 66, threonine 67, threonine 68, 129–131 (EDF), arginine 172, tyrosine 182, and arginine 219. Position 67 (threonine 67) interacts with Mg(2+). The segment at 183-253 (TVDQLSAIVE…ITQMALELLQ (71 aa)) is small ATPAse domain (RuvB-S). Positions 256-333 (KLGLDHIDHK…EHFGMEIPKV (78 aa)) are head domain (RuvB-H). DNA-binding residues include arginine 311 and arginine 316.

It belongs to the RuvB family. As to quaternary structure, homohexamer. Forms an RuvA(8)-RuvB(12)-Holliday junction (HJ) complex. HJ DNA is sandwiched between 2 RuvA tetramers; dsDNA enters through RuvA and exits via RuvB. An RuvB hexamer assembles on each DNA strand where it exits the tetramer. Each RuvB hexamer is contacted by two RuvA subunits (via domain III) on 2 adjacent RuvB subunits; this complex drives branch migration. In the full resolvosome a probable DNA-RuvA(4)-RuvB(12)-RuvC(2) complex forms which resolves the HJ.

The protein localises to the cytoplasm. It catalyses the reaction ATP + H2O = ADP + phosphate + H(+). In terms of biological role, the RuvA-RuvB-RuvC complex processes Holliday junction (HJ) DNA during genetic recombination and DNA repair, while the RuvA-RuvB complex plays an important role in the rescue of blocked DNA replication forks via replication fork reversal (RFR). RuvA specifically binds to HJ cruciform DNA, conferring on it an open structure. The RuvB hexamer acts as an ATP-dependent pump, pulling dsDNA into and through the RuvAB complex. RuvB forms 2 homohexamers on either side of HJ DNA bound by 1 or 2 RuvA tetramers; 4 subunits per hexamer contact DNA at a time. Coordinated motions by a converter formed by DNA-disengaged RuvB subunits stimulates ATP hydrolysis and nucleotide exchange. Immobilization of the converter enables RuvB to convert the ATP-contained energy into a lever motion, pulling 2 nucleotides of DNA out of the RuvA tetramer per ATP hydrolyzed, thus driving DNA branch migration. The RuvB motors rotate together with the DNA substrate, which together with the progressing nucleotide cycle form the mechanistic basis for DNA recombination by continuous HJ branch migration. Branch migration allows RuvC to scan DNA until it finds its consensus sequence, where it cleaves and resolves cruciform DNA. The protein is Holliday junction branch migration complex subunit RuvB of Bacillus cereus (strain B4264).